Reading from the N-terminus, the 236-residue chain is Aspartate/glutamate leucyltransferase (236 aa).

It belongs to the R-transferase family. Bpt subfamily.

The protein resides in the cytoplasm. The enzyme catalyses N-terminal L-glutamyl-[protein] + L-leucyl-tRNA(Leu) = N-terminal L-leucyl-L-glutamyl-[protein] + tRNA(Leu) + H(+). It catalyses the reaction N-terminal L-aspartyl-[protein] + L-leucyl-tRNA(Leu) = N-terminal L-leucyl-L-aspartyl-[protein] + tRNA(Leu) + H(+). In terms of biological role, functions in the N-end rule pathway of protein degradation where it conjugates Leu from its aminoacyl-tRNA to the N-termini of proteins containing an N-terminal aspartate or glutamate. This is Aspartate/glutamate leucyltransferase from Saccharophagus degradans (strain 2-40 / ATCC 43961 / DSM 17024).